The chain runs to 81 residues: Trefoil factor 1 (81 aa).

The N-terminal stretch at Met-1 to Ala-21 is a signal peptide. A Pyrrolidone carboxylic acid modification is found at Gln-22. The region spanning Glu-26–Leu-69 is the P-type domain. Disulfide bonds link Cys-28–Cys-54, Cys-38–Cys-53, and Cys-48–Cys-65.

It is found in the secreted. Stabilizer of the mucous gel overlying the gastrointestinal mucosa that provides a physical barrier against various noxious agents. The polypeptide is Trefoil factor 1 (Tff1) (Rattus norvegicus (Rat)).